We begin with the raw amino-acid sequence, 550 residues long: Invertase (550 aa).

The first 22 residues, 1-22 (MIQLSPLLLLPLFSVFNSIADA), serve as a signal peptide directing secretion. Residues 39–42 (WMND), glutamine 60, and 103–104 (FS) each bind substrate. The active site involves aspartate 42. Asparagine 112, asparagine 113, asparagine 119, and asparagine 165 each carry an N-linked (GlcNAc...) asparagine glycan. 170 to 171 (RD) is a binding site for substrate. Asparagine 211 carries N-linked (GlcNAc...) asparagine glycosylation. Glutamate 223 lines the substrate pocket. A glycan (N-linked (GlcNAc...) asparagine) is linked at asparagine 237. Tryptophan 313 contributes to the substrate binding site. Asparagine 333, asparagine 364, asparagine 398, and asparagine 420 each carry an N-linked (GlcNAc...) asparagine glycan.

Belongs to the glycosyl hydrolase 32 family.

It catalyses the reaction Hydrolysis of terminal non-reducing beta-D-fructofuranoside residues in beta-D-fructofuranosides.. In Wickerhamomyces anomalus (Yeast), this protein is Invertase (INV1).